Here is a 381-residue protein sequence, read N- to C-terminus: Queuine tRNA-ribosyltransferase (381 aa).

Catalysis depends on D92, which acts as the Proton acceptor. Residues 92-96 (DSGGF), D146, Q190, and G217 each bind substrate. The tract at residues 248–254 (GVGRPED) is RNA binding. D267 acts as the Nucleophile in catalysis. The RNA binding; important for wobble base 34 recognition stretch occupies residues 272 to 276 (TRNAR). Zn(2+) is bound by residues C305, C307, C310, and H337.

It belongs to the queuine tRNA-ribosyltransferase family. As to quaternary structure, homodimer. Within each dimer, one monomer is responsible for RNA recognition and catalysis, while the other monomer binds to the replacement base PreQ1. Zn(2+) serves as cofactor.

It carries out the reaction 7-aminomethyl-7-carbaguanine + guanosine(34) in tRNA = 7-aminomethyl-7-carbaguanosine(34) in tRNA + guanine. The protein operates within tRNA modification; tRNA-queuosine biosynthesis. Catalyzes the base-exchange of a guanine (G) residue with the queuine precursor 7-aminomethyl-7-deazaguanine (PreQ1) at position 34 (anticodon wobble position) in tRNAs with GU(N) anticodons (tRNA-Asp, -Asn, -His and -Tyr). Catalysis occurs through a double-displacement mechanism. The nucleophile active site attacks the C1' of nucleotide 34 to detach the guanine base from the RNA, forming a covalent enzyme-RNA intermediate. The proton acceptor active site deprotonates the incoming PreQ1, allowing a nucleophilic attack on the C1' of the ribose to form the product. After dissociation, two additional enzymatic reactions on the tRNA convert PreQ1 to queuine (Q), resulting in the hypermodified nucleoside queuosine (7-(((4,5-cis-dihydroxy-2-cyclopenten-1-yl)amino)methyl)-7-deazaguanosine). The polypeptide is Queuine tRNA-ribosyltransferase (Xanthomonas campestris pv. campestris (strain B100)).